The chain runs to 206 residues: Large ribosomal subunit protein uL4 (206 aa).

Positions 44–87 (NRQGTQSAKTRSEVSGGGRKPWRQKGTGHARQGSTRSPQWTGGG) are disordered.

It belongs to the universal ribosomal protein uL4 family. Part of the 50S ribosomal subunit.

Functionally, one of the primary rRNA binding proteins, this protein initially binds near the 5'-end of the 23S rRNA. It is important during the early stages of 50S assembly. It makes multiple contacts with different domains of the 23S rRNA in the assembled 50S subunit and ribosome. Its function is as follows. Forms part of the polypeptide exit tunnel. In Lachnospira eligens (strain ATCC 27750 / DSM 3376 / VPI C15-48 / C15-B4) (Eubacterium eligens), this protein is Large ribosomal subunit protein uL4.